Consider the following 574-residue polypeptide: Actin-binding protein wsp1 (574 aa).

Residues 19–130 (IPKSTNKIIA…KKVLDKGCHP (112 aa)) enclose the WH1 domain. Disordered stretches follow at residues 144–186 (KGSS…ELLN), 221–494 (AGTP…IAEL), and 517–574 (KSRK…DEWD). Positions 149 to 158 (HAPNNSNIQP) are enriched in polar residues. Composition is skewed to pro residues over residues 230-240 (PPIPPSIPSSR) and 251-260 (PAPPPIPPPS). Composition is skewed to low complexity over residues 297–306 (SRVSAAALAA) and 324–335 (KPPIGNGSSNSS). Over residues 352 to 368 (PLPPQGRSAPPPPPPRS) the composition is skewed to pro residues. Position 386 is a phosphoserine (Ser386). Pro residues predominate over residues 415-485 (PPVPTPPSLP…PPPAPAPAPA (71 aa)). The 20-residue stretch at 499–518 (GRANLMASIRASGGMDLLKS) folds into the WH2 domain. Over residues 521-545 (VSASPSVASTKTSNPPVEAPPSNNL) the composition is skewed to polar residues. Acidic residues predominate over residues 563–574 (SDEEDEDDDEWD).

In terms of assembly, interacts with vrp1.

It localises to the cytoplasm. It is found in the cytoskeleton. Its function is as follows. Has a role in regulating actin assembly, so regulating polarized growth. The polypeptide is Actin-binding protein wsp1 (wsp1) (Schizosaccharomyces pombe (strain 972 / ATCC 24843) (Fission yeast)).